The following is a 364-amino-acid chain: MTIYNFSAGPATLPKPVLEKAQAELLNYQDSGMSVLEMSHRSPEFDKIIKDAEATLRELMAIPDNYKVIFLQGGASTQFTMVPLNLAQGKKAYYLVGGSWGKKAYTEAVKLSKTIPFEPILLASSEDTVYDHIPSFDPSTIDPEAAYVHLTTNNTIEGTSIYDLPDTNGVPIVADMSSNILAARYNVEDFALIYAGAQKNIGPAGVTVVIVREDFLNDQPQLSAMLDYRIQAEAGSLYNTPPCFNIYISKLVFDWVKNEIGGVDKMAEIQREKSGLLYDYIESSDFYTNPVKDAKDRSVCNIPFVTPSKDLDAKFVAEADALGFKNIKGHRSVGGMRASVYNAFPRQGVLDLIDFMKKFEDENK.

Arginine 41 contributes to the L-glutamate binding site. Pyridoxal 5'-phosphate-binding positions include 75 to 76, tryptophan 100, threonine 155, aspartate 175, and glutamine 198; that span reads AS. Residue lysine 199 is modified to N6-(pyridoxal phosphate)lysine. Residue 239 to 240 coordinates pyridoxal 5'-phosphate; it reads NT.

Belongs to the class-V pyridoxal-phosphate-dependent aminotransferase family. SerC subfamily. Homodimer. Pyridoxal 5'-phosphate serves as cofactor.

The protein resides in the cytoplasm. It catalyses the reaction O-phospho-L-serine + 2-oxoglutarate = 3-phosphooxypyruvate + L-glutamate. The catalysed reaction is 4-(phosphooxy)-L-threonine + 2-oxoglutarate = (R)-3-hydroxy-2-oxo-4-phosphooxybutanoate + L-glutamate. Its pathway is amino-acid biosynthesis; L-serine biosynthesis; L-serine from 3-phospho-D-glycerate: step 2/3. Catalyzes the reversible conversion of 3-phosphohydroxypyruvate to phosphoserine and of 3-hydroxy-2-oxo-4-phosphonooxybutanoate to phosphohydroxythreonine. The polypeptide is Phosphoserine aminotransferase (Streptococcus thermophilus (strain CNRZ 1066)).